A 384-amino-acid polypeptide reads, in one-letter code: Gibberellin 3-beta-dioxygenase 1 (384 aa).

The Fe2OG dioxygenase domain maps to 225-327; it reads TLTSTIHLNM…RISMPYFLGP (103 aa). Fe cation is bound by residues H250, D252, and H308. 2-oxoglutarate contacts are provided by R318 and S320.

This sequence belongs to the iron/ascorbate-dependent oxidoreductase family. L-ascorbate serves as cofactor. Fe(2+) is required as a cofactor. In terms of tissue distribution, expressed in unopened flowers.

It catalyses the reaction gibberellin A20 + 2-oxoglutarate + O2 = gibberellin A1 + succinate + CO2. It functions in the pathway plant hormone biosynthesis; gibberellin biosynthesis. Functionally, catalyzes the 3-beta-hydroxylation of the inactive gibberellin precursors, leading to the formation of bioactive gibberellins. In vitro, converts the precursors GA20, GA5, GA44 and GA9 to the corresponding 3-beta-hydroxylated bioactive products GA1, GA3, GA38 and GA4, respectively. Involved in the production of bioactive GA for vegetative growth and development. May possess 2,3-desaturase activity, catalyzing the conversion of GA9 to 2,3-dehydro-GA9, and GA20 to GA5 (2,3-dehydro GA20). May possess 2-beta-hydroxylase activity, catalyzing the conversion of GA1 and GA4 to the corresponding 2-beta-hydroxylated products GA8 and GA34, respectively. The polypeptide is Gibberellin 3-beta-dioxygenase 1 (Oryza sativa subsp. japonica (Rice)).